The primary structure comprises 1394 residues: Adhesion and penetration protein autotransporter (1394 aa).

The first 25 residues, 1–25 (MKKTVFRLNFLTACISLGIVSQAWA), serve as a signal peptide directing secretion. The Peptidase S6 domain occupies 26 to 286 (GHTYFGIDYQ…QLVRKSYFDE (261 aa)). Ser243 is an active-site residue. 2 disordered regions span residues 848–870 (AYSASSNNTPRRRSLETETTPTS) and 995–1027 (TLEAKQVEPTAKTQTGEPKVRSRRAARAAFPDT). In terms of domain architecture, Autotransporter spans 1140–1394 (VDQAQSAVWT…NVGVKLGYRW (255 aa)).

Its subcellular location is the periplasm. It localises to the secreted. It is found in the cell surface. The protein localises to the cell outer membrane. In terms of biological role, probable protease; promotes adherence and invasion by directly binding to a host cell structure. The chain is Adhesion and penetration protein autotransporter (hap) from Haemophilus influenzae.